The primary structure comprises 1401 residues: DNA-directed RNA polymerase subunit beta' (1401 aa).

Residues cysteine 71, cysteine 73, cysteine 86, and cysteine 89 each contribute to the Zn(2+) site. 3 residues coordinate Mg(2+): aspartate 462, aspartate 464, and aspartate 466. Zn(2+) contacts are provided by cysteine 810, cysteine 884, cysteine 891, and cysteine 894. Positions arginine 1377 to glutamate 1401 are disordered.

This sequence belongs to the RNA polymerase beta' chain family. As to quaternary structure, the RNAP catalytic core consists of 2 alpha, 1 beta, 1 beta' and 1 omega subunit. When a sigma factor is associated with the core the holoenzyme is formed, which can initiate transcription. Mg(2+) is required as a cofactor. Requires Zn(2+) as cofactor.

The catalysed reaction is RNA(n) + a ribonucleoside 5'-triphosphate = RNA(n+1) + diphosphate. Functionally, DNA-dependent RNA polymerase catalyzes the transcription of DNA into RNA using the four ribonucleoside triphosphates as substrates. This chain is DNA-directed RNA polymerase subunit beta', found in Rhizobium meliloti (strain 1021) (Ensifer meliloti).